Here is a 507-residue protein sequence, read N- to C-terminus: CWF19-like protein DRN1 (507 aa).

Phosphoserine is present on S242.

This sequence belongs to the CWF19 family. In terms of assembly, interacts with DBR1. Interacts with SYF1, a component of the NTC complex. Interacts with lariat-introns and lariat-intermediates.

The protein resides in the nucleus. It localises to the cytoplasm. Involved in branched RNA metabolism, modulating the turnover of lariat-intron pre-mRNAs by the lariat-debranching enzyme DBR1. Enhances the debranching activity of DBR1 in vitro. The chain is CWF19-like protein DRN1 (DRN1) from Saccharomyces cerevisiae (strain ATCC 204508 / S288c) (Baker's yeast).